A 51-amino-acid polypeptide reads, in one-letter code: Large ribosomal subunit protein eL39 (51 aa).

Residues 1-19 (MSHNMKGQKKRLAKAHKQN) are compositionally biased toward basic residues. A disordered region spans residues 1-23 (MSHNMKGQKKRLAKAHKQNSRVP).

The protein belongs to the eukaryotic ribosomal protein eL39 family.

This is Large ribosomal subunit protein eL39 from Methanosarcina mazei (strain ATCC BAA-159 / DSM 3647 / Goe1 / Go1 / JCM 11833 / OCM 88) (Methanosarcina frisia).